Consider the following 167-residue polypeptide: Glucose-6-phosphate isomerase (167 aa).

The active-site Proton donor is Glu54. Residue His85 is part of the active site.

Belongs to the GPI family.

The protein localises to the cytoplasm. The catalysed reaction is alpha-D-glucose 6-phosphate = beta-D-fructose 6-phosphate. The protein operates within carbohydrate biosynthesis; gluconeogenesis. It participates in carbohydrate degradation; glycolysis; D-glyceraldehyde 3-phosphate and glycerone phosphate from D-glucose: step 2/4. Catalyzes the reversible isomerization of glucose-6-phosphate to fructose-6-phosphate. In Klebsiella oxytoca, this protein is Glucose-6-phosphate isomerase.